Consider the following 339-residue polypeptide: Holliday junction branch migration complex subunit RuvB (339 aa).

Residues 1–181 are large ATPase domain (RuvB-L); it reads MEERLVSGYE…FGMVHRLEFY (181 aa). ATP-binding positions include L20, R21, G62, K65, T66, T67, 128-130, R171, Y181, and R218; that span reads EDF. Mg(2+) is bound at residue T66. A small ATPAse domain (RuvB-S) region spans residues 182-252; the sequence is SVEELMLIIN…NAKAALDLLE (71 aa). A head domain (RuvB-H) region spans residues 255–339; sequence ELGLDPTDRL…NKNAGELSLW (85 aa). The DNA site is built by R310 and R315.

The protein belongs to the RuvB family. As to quaternary structure, homohexamer. Forms an RuvA(8)-RuvB(12)-Holliday junction (HJ) complex. HJ DNA is sandwiched between 2 RuvA tetramers; dsDNA enters through RuvA and exits via RuvB. An RuvB hexamer assembles on each DNA strand where it exits the tetramer. Each RuvB hexamer is contacted by two RuvA subunits (via domain III) on 2 adjacent RuvB subunits; this complex drives branch migration. In the full resolvosome a probable DNA-RuvA(4)-RuvB(12)-RuvC(2) complex forms which resolves the HJ.

It is found in the cytoplasm. It carries out the reaction ATP + H2O = ADP + phosphate + H(+). The RuvA-RuvB-RuvC complex processes Holliday junction (HJ) DNA during genetic recombination and DNA repair, while the RuvA-RuvB complex plays an important role in the rescue of blocked DNA replication forks via replication fork reversal (RFR). RuvA specifically binds to HJ cruciform DNA, conferring on it an open structure. The RuvB hexamer acts as an ATP-dependent pump, pulling dsDNA into and through the RuvAB complex. RuvB forms 2 homohexamers on either side of HJ DNA bound by 1 or 2 RuvA tetramers; 4 subunits per hexamer contact DNA at a time. Coordinated motions by a converter formed by DNA-disengaged RuvB subunits stimulates ATP hydrolysis and nucleotide exchange. Immobilization of the converter enables RuvB to convert the ATP-contained energy into a lever motion, pulling 2 nucleotides of DNA out of the RuvA tetramer per ATP hydrolyzed, thus driving DNA branch migration. The RuvB motors rotate together with the DNA substrate, which together with the progressing nucleotide cycle form the mechanistic basis for DNA recombination by continuous HJ branch migration. Branch migration allows RuvC to scan DNA until it finds its consensus sequence, where it cleaves and resolves cruciform DNA. The protein is Holliday junction branch migration complex subunit RuvB of Carboxydothermus hydrogenoformans (strain ATCC BAA-161 / DSM 6008 / Z-2901).